We begin with the raw amino-acid sequence, 388 residues long: Succinate--CoA ligase [ADP-forming] subunit beta (388 aa).

The ATP-grasp domain maps to 9–244; sequence KEILRKFGVA…LDEEDPAEIE (236 aa). Residues lysine 46, 53–55, glutamate 99, alanine 102, and glutamate 107 each bind ATP; that span reads GRG. Mg(2+)-binding residues include asparagine 199 and aspartate 213. Substrate is bound by residues asparagine 264 and 321–323; that span reads GIM.

It belongs to the succinate/malate CoA ligase beta subunit family. As to quaternary structure, heterotetramer of two alpha and two beta subunits. The cofactor is Mg(2+).

The catalysed reaction is succinate + ATP + CoA = succinyl-CoA + ADP + phosphate. It carries out the reaction GTP + succinate + CoA = succinyl-CoA + GDP + phosphate. It functions in the pathway carbohydrate metabolism; tricarboxylic acid cycle; succinate from succinyl-CoA (ligase route): step 1/1. Functionally, succinyl-CoA synthetase functions in the citric acid cycle (TCA), coupling the hydrolysis of succinyl-CoA to the synthesis of either ATP or GTP and thus represents the only step of substrate-level phosphorylation in the TCA. The beta subunit provides nucleotide specificity of the enzyme and binds the substrate succinate, while the binding sites for coenzyme A and phosphate are found in the alpha subunit. The sequence is that of Succinate--CoA ligase [ADP-forming] subunit beta from Burkholderia ambifaria (strain MC40-6).